The chain runs to 309 residues: Olfactory receptor 4B1 (309 aa).

At 1–23 (MASTSNVTELIFTGLFQDPAVQS) the chain is on the extracellular side. Asn-6 carries an N-linked (GlcNAc...) asparagine glycan. Residues 24–47 (VCFVVFLPVYLATVVGNGLIVLTV) form a helical membrane-spanning segment. Over 48-55 (SISKSLDS) the chain is Cytoplasmic. A helical transmembrane segment spans residues 56–77 (PMYFFLSCLSLVEISYSSTIAP). At 78–98 (KFIIDLLAKIKTISLEGCLTQ) the chain is on the extracellular side. Cys-95 and Cys-187 form a disulfide bridge. The helical transmembrane segment at 99–118 (IFFFHFFGVAEILLIVVMAY) threads the bilayer. The Cytoplasmic portion of the chain corresponds to 119–137 (DCYVAICKPLHYMNIISRQ). A helical membrane pass occupies residues 138 to 156 (LCHLLVAGSWLGGFCHSII). The Extracellular portion of the chain corresponds to 157 to 193 (QILVIIQLPFCGPNVIDHYFCDLQPLFKLACTDTFME). Residues 194 to 217 (GVIVLANSGLFSVFSFLILVSSYI) traverse the membrane as a helical segment. Topologically, residues 218–233 (VILVNLRNHSAEGRHK) are cytoplasmic. Residues 234–256 (ALSTCASHITVVILFFGPAIFLY) traverse the membrane as a helical segment. Topologically, residues 257–267 (MRPSSTFTEDK) are extracellular. A helical transmembrane segment spans residues 268 to 287 (LVAVFYTVITPMLNPIIYTL). Residues 288–309 (RNAEVKIAIRRLWSKKENPGRE) lie on the Cytoplasmic side of the membrane.

This sequence belongs to the G-protein coupled receptor 1 family.

Its subcellular location is the cell membrane. In terms of biological role, odorant receptor. In Homo sapiens (Human), this protein is Olfactory receptor 4B1 (OR4B1).